Here is a 197-residue protein sequence, read N- to C-terminus: Peptidyl-tRNA hydrolase (197 aa).

A tRNA-binding site is contributed by Tyr18. Residue His23 is the Proton acceptor of the active site. The tRNA site is built by Phe69, Asn71, and Asn117.

Belongs to the PTH family. Monomer.

It localises to the cytoplasm. It carries out the reaction an N-acyl-L-alpha-aminoacyl-tRNA + H2O = an N-acyl-L-amino acid + a tRNA + H(+). In terms of biological role, hydrolyzes ribosome-free peptidyl-tRNAs (with 1 or more amino acids incorporated), which drop off the ribosome during protein synthesis, or as a result of ribosome stalling. Catalyzes the release of premature peptidyl moieties from peptidyl-tRNA molecules trapped in stalled 50S ribosomal subunits, and thus maintains levels of free tRNAs and 50S ribosomes. This is Peptidyl-tRNA hydrolase from Psychromonas ingrahamii (strain DSM 17664 / CCUG 51855 / 37).